Consider the following 519-residue polypeptide: NADH-quinone oxidoreductase subunit N (519 aa).

Helical transmembrane passes span 22–42, 53–73, 87–107, 141–161, 163–183, 198–218, 242–262, 287–307, 310–330, 336–356, 363–383, 406–426, 442–461, and 483–503; these read LLPM…EAFV, VLAL…TGLP, PTLF…LLIA, TEVF…PAAN, LITA…LAGM, YFLL…LVYG, IIVG…GVPF, VAAF…LAWD, PVIW…GITQ, LLAY…AATT, VLFY…IVIL, LVAG…PTSG, AGPL…YYYL, and GALA…LGIV.

It belongs to the complex I subunit 2 family. NDH-1 is composed of 14 different subunits. Subunits NuoA, H, J, K, L, M, N constitute the membrane sector of the complex.

The protein localises to the cell membrane. The enzyme catalyses a quinone + NADH + 5 H(+)(in) = a quinol + NAD(+) + 4 H(+)(out). Functionally, NDH-1 shuttles electrons from NADH, via FMN and iron-sulfur (Fe-S) centers, to quinones in the respiratory chain. The immediate electron acceptor for the enzyme in this species is believed to be a menaquinone. Couples the redox reaction to proton translocation (for every two electrons transferred, four hydrogen ions are translocated across the cytoplasmic membrane), and thus conserves the redox energy in a proton gradient. In Acidothermus cellulolyticus (strain ATCC 43068 / DSM 8971 / 11B), this protein is NADH-quinone oxidoreductase subunit N.